Here is a 321-residue protein sequence, read N- to C-terminus: Malate dehydrogenase (321 aa).

NAD(+) contacts are provided by residues Gly10–Gly15 and Asp34. Residues Arg83 and Arg89 each contribute to the substrate site. NAD(+)-binding positions include Asn96 and Ile119 to Asn121. Asn121 and Arg152 together coordinate substrate. His176 (proton acceptor) is an active-site residue.

The protein belongs to the LDH/MDH superfamily. MDH type 3 family.

It carries out the reaction (S)-malate + NAD(+) = oxaloacetate + NADH + H(+). Functionally, catalyzes the reversible oxidation of malate to oxaloacetate. This is Malate dehydrogenase from Methylocella silvestris (strain DSM 15510 / CIP 108128 / LMG 27833 / NCIMB 13906 / BL2).